Here is a 675-residue protein sequence, read N- to C-terminus: INO80 complex subunit D (675 aa).

5 disordered regions span residues 1–39 (MNNN…NVNQ), 183–203 (TGNN…NSTP), 274–324 (LKQK…ERQV), 473–523 (DSNK…KLNK), and 627–675 (VPVT…TMIS). Composition is skewed to low complexity over residues 282–318 (QQLQ…QLQI), 482–519 (NNDN…NNNN), and 634–648 (NQNN…TNNS). Residues 664–675 (EILKDSDNTMIS) are compositionally biased toward basic and acidic residues.

The protein belongs to the INO80D family. As to quaternary structure, component of the chromatin-remodeling INO80 complex.

The protein resides in the nucleus. Its function is as follows. Putative regulatory component of the chromatin remodeling INO80 complex which is involved in transcriptional regulation, DNA replication and probably DNA repair. The protein is INO80 complex subunit D of Dictyostelium discoideum (Social amoeba).